The chain runs to 254 residues: tRNA uridine(34) hydroxylase (254 aa).

In terms of domain architecture, Rhodanese spans 123–217 (QDPNVILLDT…YLESIPESES (95 aa)). The active-site Cysteine persulfide intermediate is Cys-177.

This sequence belongs to the TrhO family.

It catalyses the reaction uridine(34) in tRNA + AH2 + O2 = 5-hydroxyuridine(34) in tRNA + A + H2O. In terms of biological role, catalyzes oxygen-dependent 5-hydroxyuridine (ho5U) modification at position 34 in tRNAs. The polypeptide is tRNA uridine(34) hydroxylase (Legionella pneumophila (strain Paris)).